A 502-amino-acid chain; its full sequence is Dipeptide and tripeptide permease A (502 aa).

Residues M1–R35 are Cytoplasmic-facing. Residues F36–S56 form a helical membrane-spanning segment. Residues E57–S60 are Periplasmic-facing. Residues I61–L81 form a helical membrane-spanning segment. Topologically, residues G82–R90 are cytoplasmic. The helical transmembrane segment at V91 to H111 threads the bilayer. Residue D112 is a topological domain, periplasmic. The chain crosses the membrane as a helical span at residues A113 to N133. The Cytoplasmic segment spans residues P134 to T154. Residues M155–A175 form a helical membrane-spanning segment. Residues A176–G179 are Periplasmic-facing. A helical transmembrane segment spans residues W180–F200. Residues C201–H218 are Cytoplasmic-facing. A helical transmembrane segment spans residues I219–L239. The Periplasmic segment spans residues L240 to R247. Residues A248–M268 traverse the membrane as a helical segment. Residues Q269–K275 lie on the Cytoplasmic side of the membrane. The helical transmembrane segment at M276 to M296 threads the bilayer. Residues P297–Q321 are Periplasmic-facing. Residues F322–N342 form a helical membrane-spanning segment. At K343–K353 the chain is on the cytoplasmic side. A helical membrane pass occupies residues F354–F374. Topologically, residues A375–N384 are periplasmic. Residues W385 to L405 form a helical membrane-spanning segment. At A406 to R415 the chain is on the cytoplasmic side. Residues L416 to G436 form a helical membrane-spanning segment. Topologically, residues K437–R460 are periplasmic. The chain crosses the membrane as a helical span at residues V461–P481. The Cytoplasmic segment spans residues K482–A502.

The protein belongs to the major facilitator superfamily. Proton-dependent oligopeptide transporter (POT/PTR) (TC 2.A.17) family. DtpA subfamily.

It is found in the cell inner membrane. Its function is as follows. Proton-dependent permease that transports di- and tripeptides. This Enterobacter sp. (strain 638) protein is Dipeptide and tripeptide permease A.